Here is a 104-residue protein sequence, read N- to C-terminus: L-rhamnose mutarotase (104 aa).

Position 18 (Tyr-18) interacts with substrate. The active-site Proton donor is His-22. Substrate is bound by residues Tyr-41 and 76–77 (WW).

Belongs to the rhamnose mutarotase family. In terms of assembly, homodimer.

The protein resides in the cytoplasm. The enzyme catalyses alpha-L-rhamnose = beta-L-rhamnose. The protein operates within carbohydrate metabolism; L-rhamnose metabolism. Involved in the anomeric conversion of L-rhamnose. The chain is L-rhamnose mutarotase from Burkholderia ambifaria (strain MC40-6).